Reading from the N-terminus, the 591-residue chain is UvrABC system protein C (591 aa).

A GIY-YIG domain is found at 14 to 91 (DSPGCYLHKD…IQKNMPKYNI (78 aa)). A UVR domain is found at 196–231 (DKIVTGLKEKMLAASQAMEFERAAEYRDLISGIATL).

Belongs to the UvrC family. Interacts with UvrB in an incision complex.

It localises to the cytoplasm. Functionally, the UvrABC repair system catalyzes the recognition and processing of DNA lesions. UvrC both incises the 5' and 3' sides of the lesion. The N-terminal half is responsible for the 3' incision and the C-terminal half is responsible for the 5' incision. The chain is UvrABC system protein C from Streptococcus uberis (strain ATCC BAA-854 / 0140J).